A 489-amino-acid chain; its full sequence is Mitochondrial-processing peptidase subunit beta (489 aa).

Residues 1 to 45 constitute a mitochondrion transit peptide; the sequence is MAAAALSRTLLPEARRRLWGFTRRLPLRRAAAQPLYFGGDRLRST. His101 is a Zn(2+) binding site. Glu104 (proton acceptor) is an active-site residue. 2 residues coordinate Zn(2+): His105 and Glu181.

It belongs to the peptidase M16 family. Heterodimer of PMPCA (alpha) and PMPCB (beta) subunits, forming the mitochondrial processing protease (MPP) in which PMPCA is involved in substrate recognition and binding and PMPCB is the catalytic subunit. It depends on Zn(2+) as a cofactor.

The protein resides in the mitochondrion matrix. The catalysed reaction is Release of N-terminal transit peptides from precursor proteins imported into the mitochondrion, typically with Arg in position P2.. With respect to regulation, binding to PMPCA is required for catalytic activity. Catalytic subunit of the essential mitochondrial processing protease (MPP), which cleaves the mitochondrial sequence off newly imported precursors proteins. Preferentially, cleaves after an arginine at position P2. Required for PINK1 turnover by coupling PINK1 mitochondrial import and cleavage, which results in subsequent PINK1 proteolysis. This Mus musculus (Mouse) protein is Mitochondrial-processing peptidase subunit beta (Pmpcb).